A 129-amino-acid polypeptide reads, in one-letter code: Large ribosomal subunit protein mL53 (129 aa).

Residues 1–50 constitute a mitochondrion transit peptide; the sequence is MREKLNLLAKLKSVVYKFDPLNPNTRSIRSFIPLTTCKRSRQLAPECSIS.

The protein belongs to the mitochondrion-specific ribosomal protein mL53 family.

Its subcellular location is the mitochondrion. This chain is Large ribosomal subunit protein mL53 (mrpl53), found in Dictyostelium discoideum (Social amoeba).